The sequence spans 179 residues: Macro domain-containing protein XCC3184 (179 aa).

In terms of domain architecture, Macro spans 1–175 (MRIEVWQGDI…AYHQALATQE (175 aa)).

Belongs to the MacroD-type family.

In Xanthomonas campestris pv. campestris (strain ATCC 33913 / DSM 3586 / NCPPB 528 / LMG 568 / P 25), this protein is Macro domain-containing protein XCC3184.